An 87-amino-acid polypeptide reads, in one-letter code: Large ribosomal subunit protein bL27 (87 aa).

It belongs to the bacterial ribosomal protein bL27 family.

In Stenotrophomonas maltophilia (strain R551-3), this protein is Large ribosomal subunit protein bL27.